A 112-amino-acid chain; its full sequence is Protein preY, mitochondrial (112 aa).

A mitochondrion-targeting transit peptide spans 1 to 34 (MLTTTCRRLSQALQRPHALSAVAQRCLRAPGARS). In terms of domain architecture, TRM112 spans 49–95 (HPALLQFLVCPLSKKPLRYDASTNELINDELGIAYPIIDGVPNMIPQ).

Belongs to the PREY family. Interacts (via TRM112 domain) with NDUFAF5; the interaction is direct and stabilizes NDUFAF5 protein. Interacts with COQ5; the interaction is direct, stabilizes COQ5 protein and associates PYURF with COQ enzyme complex.

It localises to the mitochondrion. In mitochondria, S-adenosylmethionine-dependent methyltransferase chaperone that supports both coenzyme Q biosynthesis, by stabilizing its components, such as COQ5, and NADH:ubiquinone oxidoreductase complex (complex I, MT-ND1) assembly, by stabilizing complex I assembly factors, such as NDUFAF5. The chain is Protein preY, mitochondrial (Pyurf) from Rattus norvegicus (Rat).